A 57-amino-acid chain; its full sequence is Potassium channel toxin alpha-KTx 26.1 (57 aa).

Residues 1-22 (MSRLFVFILIALFLSAIIDVMS) form the signal peptide. 3 cysteine pairs are disulfide-bonded: Cys30/Cys48, Cys34/Cys53, and Cys38/Cys55.

It belongs to the short scorpion toxin superfamily. Potassium channel inhibitor family. Alpha-KTx 26 subfamily. As to expression, expressed by the venom gland.

Its subcellular location is the secreted. Recombinant toxin that reversibly inhibits the potassium current of mKv1.3/KCNA3 channel stably expressed in COS7 cells (IC(50)=150 nM). Also shows a weak inhibition on Kv1.2/KCNA2, Kv1.3/KCNA3 and TRPV1 channels. This chain is Potassium channel toxin alpha-KTx 26.1, found in Olivierus martensii (Manchurian scorpion).